We begin with the raw amino-acid sequence, 729 residues long: Solute carrier family 15 member 2 (729 aa).

The disordered stretch occupies residues 1 to 35; sequence MNPFQKNESKETLFSPVSTEEMLPRPPSPPKKSPP. The Cytoplasmic segment spans residues 1–57; it reads MNPFQKNESKETLFSPVSTEEMLPRPPSPPKKSPPKIFGSSYPVSIAFIVVNEFCER. Position 9 is a phosphoserine (Ser-9). Thr-12 carries the phosphothreonine modification. The residue at position 28 (Ser-28) is a Phosphoserine. Residues 58–78 form a helical membrane-spanning segment; the sequence is FSYYGMKAVLTLYFLYFLHWN. At 79 to 87 the chain is on the extracellular side; that stretch reads EDTSTSVYH. A helical transmembrane segment spans residues 88 to 108; it reads AFSSLCYFTPILGAAIADSWL. The Cytoplasmic portion of the chain corresponds to 109–113; the sequence is GKFKT. The helical transmembrane segment at 114-134 threads the bilayer; sequence IIYLSLVYVLGHVFKSLGAIP. Over 135 to 139 the chain is Extracellular; sequence ILGGK. Residues 140 to 160 form a helical membrane-spanning segment; the sequence is MLHTILSLVGLSLIALGTGGI. Over 161 to 183 the chain is Cytoplasmic; it reads KPCVAAFGGDQFEEEHAEARTRY. A helical membrane pass occupies residues 184–204; sequence FSVFYLAINAGSLISTFITPM. At 205-217 the chain is on the extracellular side; sequence LRGDVKCFGQDCY. Residues 218–238 form a helical membrane-spanning segment; it reads ALAFGVPGLLMVLALVVFAMG. Residues 239 to 295 are Cytoplasmic-facing; it reads SKMYRKPPPEGNIVAQVIKCIWFALCNRFRNRSGDLPKRQHWLDWAAEKYPKHLIAD. The chain crosses the membrane as a helical span at residues 296–316; it reads VKALTRVLFLYIPLPMFWALL. At 317–343 the chain is on the extracellular side; that stretch reads DQQGSRWTLQANKMNGDLGFFVLQPDQ. A helical membrane pass occupies residues 344–364; sequence MQVLNPFLVLIFIPLFDLVIY. Topologically, residues 365 to 380 are cytoplasmic; sequence RLISKCRINFSSLRKM. Residues 381 to 401 traverse the membrane as a helical segment; sequence AVGMILACLAFAVAALVETKI. At 402 to 611 the chain is on the extracellular side; sequence NGMIHPQPAS…PVNKLSIAWQ (210 aa). The extracellular domain (ECD) stretch occupies residues 402–611; sequence NGMIHPQPAS…PVNKLSIAWQ (210 aa). N-linked (GlcNAc...) asparagine glycosylation is found at Asn-435, Asn-448, Asn-528, and Asn-587. The helical transmembrane segment at 612–632 threads the bilayer; it reads LPQYVLVTAAEVMFSVTGLEF. Residues 633–643 lie on the Cytoplasmic side of the membrane; it reads SYSQAPSSMKS. A helical transmembrane segment spans residues 644–664; it reads VLQAAWLLTVAVGNIIVLVVA. Over 665-674 the chain is Extracellular; the sequence is QFSGLAQWAE. A helical transmembrane segment spans residues 675-695; it reads FVLFSCLLLVVCLIFSVMAYY. The Cytoplasmic segment spans residues 696-729; sequence YVPLKSEDTREATDKQIPAVQGNMINLETKNTRL.

This sequence belongs to the major facilitator superfamily. Proton-dependent oligopeptide transporter (POT/PTR) (TC 2.A.17) family. Interacts (via extracellular domain region) with trypsin. In terms of tissue distribution, strongly expressed in kidney cortex and medulla. Also detected in brain, lung and spleen. Expressed in choroid plexus.

The protein localises to the apical cell membrane. The protein resides in the cytoplasmic vesicle. Its subcellular location is the phagosome membrane. It localises to the cell membrane. The catalysed reaction is a dipeptide(out) + 2 H(+)(out) = a dipeptide(in) + 2 H(+)(in). It carries out the reaction glycyl-L-leucine(out) + 2 H(+)(out) = glycyl-L-leucine(in) + 2 H(+)(in). It catalyses the reaction glycyl-L-lysine(out) + 2 H(+)(out) = glycyl-L-lysine(in) + 2 H(+)(in). The enzyme catalyses glycyl-L-glutamate(out) + 3 H(+)(out) = glycyl-L-glutamate(in) + 3 H(+)(in). The catalysed reaction is L-alanyl-L-alanine(out) + 2 H(+)(out) = L-alanyl-L-alanine(in) + 2 H(+)(in). It carries out the reaction an L-amino acid tripeptide(out) + 2 H(+)(out) = an L-amino acid tripeptide(in) + 2 H(+)(in). It catalyses the reaction N-acetyl-D-muramoyl-L-alanyl-D-isoglutamine(out) + 3 H(+)(out) = N-acetyl-D-muramoyl-L-alanyl-D-isoglutamine(in) + 3 H(+)(in). The enzyme catalyses carnosine(out) + 2 H(+)(out) = carnosine(in) + 2 H(+)(in). Proton-coupled amino-acid transporter that transports oligopeptides of 2 to 4 amino acids with a preference for dipeptides. Transports neutral and anionic dipeptides with a proton to peptide stoichiometry of 2:1 or 3:1. In kidney, involved in the absorption of circulating di- and tripeptides from the glomerular filtrate. Can also transport beta-lactam antibiotics, such as the aminocephalosporin cefadroxil, and other antiviral and anticancer drugs. Transports the dipeptide-like aminopeptidase inhibitor bestatin. Also able to transport carnosine. Involved in innate immunity by promoting the detection of microbial pathogens by NOD-like receptors (NLRs). Mediates transport of bacterial peptidoglycans across the plasma membrane or, in macrophages, the phagosome membrane: catalyzes the transport of certain bacterial peptidoglycans, such as muramyl dipeptide (MDP), the NOD2 ligand. In Rattus norvegicus (Rat), this protein is Solute carrier family 15 member 2.